We begin with the raw amino-acid sequence, 457 residues long: Heme sensor protein HssS (457 aa).

2 consecutive transmembrane segments (helical) span residues 9-29 (IAIYSITVILFSALISFVLTN) and 164-184 (TFLAVLLMLLLFISISLVIAS). The 53-residue stretch at 186-238 (YSIIRPVKKLKLATERLIDGDFETPIKQTRKDEIGTLQYHFNKMRESLGQVDQ) folds into the HAMP domain. One can recognise a Histidine kinase domain in the interval 246–456 (NVSHEIKTPL…TFTITLPNNS (211 aa)). His249 bears the Phosphohistidine; by autocatalysis mark.

Autophosphorylated.

Its subcellular location is the cell membrane. It carries out the reaction ATP + protein L-histidine = ADP + protein N-phospho-L-histidine.. Member of the two-component regulatory system HssS/HssR involved in intracellular heme homeostasis and tempering of staphylococcal virulence. HssS functions as a heme sensor histidine kinase which is autophosphorylated at a histidine residue and transfers its phosphate group to an aspartate residue of HssR. HssR/HssS activates the expression of hrtAB, an efflux pump, in response to extracellular heme, hemin, hemoglobin or blood. The protein is Heme sensor protein HssS (hssS) of Staphylococcus aureus (strain MSSA476).